Reading from the N-terminus, the 540-residue chain is Phenylalanine--tRNA ligase beta subunit (540 aa).

A B5 domain is found at 268–342 (LRHTSVPFSL…MAYGYDRFTL (75 aa)). The Mg(2+) site is built by Asp320, Asp326, Glu329, and Asp330.

Belongs to the phenylalanyl-tRNA synthetase beta subunit family. Type 2 subfamily. As to quaternary structure, tetramer of two alpha and two beta subunits. It depends on Mg(2+) as a cofactor.

It is found in the cytoplasm. The enzyme catalyses tRNA(Phe) + L-phenylalanine + ATP = L-phenylalanyl-tRNA(Phe) + AMP + diphosphate + H(+). In Metallosphaera sedula (strain ATCC 51363 / DSM 5348 / JCM 9185 / NBRC 15509 / TH2), this protein is Phenylalanine--tRNA ligase beta subunit.